The primary structure comprises 432 residues: D-amino acid dehydrogenase (432 aa).

An FAD-binding site is contributed by 3-17 (VVILGSGVVGVTSAW).

The protein belongs to the DadA oxidoreductase family. FAD is required as a cofactor.

It carries out the reaction a D-alpha-amino acid + A + H2O = a 2-oxocarboxylate + AH2 + NH4(+). The protein operates within amino-acid degradation; D-alanine degradation; NH(3) and pyruvate from D-alanine: step 1/1. Functionally, oxidative deamination of D-amino acids. In Salmonella choleraesuis (strain SC-B67), this protein is D-amino acid dehydrogenase.